We begin with the raw amino-acid sequence, 177 residues long: Phycoerythrin beta subunit (177 aa).

The (2R,3E)-phycoerythrobilin site is built by Tyr-18, Lys-28, Asn-35, and Asp-39. 15,16-dihydrobiliverdin contacts are provided by Cys-50, Asp-54, and Cys-61. (2R,3E)-phycoerythrobilin-binding residues include Cys-82, Arg-84, and Asp-85. Position 129 (Arg-129) interacts with 15,16-dihydrobiliverdin. Asn-144 is a (2R,3E)-phycoerythrobilin binding site. 15,16-dihydrobiliverdin-binding residues include Gln-148 and Lys-149. Pro-154, Gly-156, and Cys-158 together coordinate (2R,3E)-phycoerythrobilin.

It belongs to the phycobiliprotein family. In terms of assembly, heterotetramer of 2 different alpha chains and 2 identical beta chains which form 2 alpha-beta heterodimers within the heterotetramer. The two alpha-beta heterodimers are rotated to an open configuration in contrast to the closed configuration found in other cryptophyte species due to the insertion of a single amino acid, 'Asp-65', in a conserved region of the alpha chain. In the open form, the central chromophores are not in physical contact but are separated by a water-filled channel. In terms of processing, contains three phycoerythrobilin chromophores and one 15,16-dihydrobiliverdin chromophore with binding of the phycoerythrobilin chromophores mediated by both the alpha and beta subunits.

The protein resides in the plastid. It is found in the chloroplast thylakoid membrane. Light-harvesting photosynthetic bile pigment-protein from the phycobiliprotein complex. The polypeptide is Phycoerythrin beta subunit (Hemiselmis andersenii (Cryptophyte alga)).